Reading from the N-terminus, the 202-residue chain is Lipid A acyltransferase PagP (202 aa).

Positions Met-1–Ala-25 are cleaved as a signal peptide. Active-site residues include His-74, Asp-117, and Ser-118.

This sequence belongs to the lipid A palmitoyltransferase family. Homodimer.

Its subcellular location is the cell outer membrane. It carries out the reaction a lipid A + a 1,2-diacyl-sn-glycero-3-phosphocholine = a hepta-acyl lipid A + a 2-acyl-sn-glycero-3-phosphocholine. The catalysed reaction is a lipid IVA + a 1,2-diacyl-sn-glycero-3-phosphocholine = a lipid IVB + a 2-acyl-sn-glycero-3-phosphocholine. It catalyses the reaction a lipid IIA + a 1,2-diacyl-sn-glycero-3-phosphocholine = a lipid IIB + a 2-acyl-sn-glycero-3-phosphocholine. Functionally, transfers a fatty acid residue from the sn-1 position of a phospholipid to the N-linked hydroxyfatty acid chain on the proximal unit of lipid A or its precursors. This is Lipid A acyltransferase PagP from Yersinia pseudotuberculosis serotype IB (strain PB1/+).